The following is a 72-amino-acid chain: Translation initiation factor IF-1 (72 aa).

One can recognise an S1-like domain in the interval 1-72 (MSKDDVIQMQ…SRARIVFRAK (72 aa)).

It belongs to the IF-1 family. Component of the 30S ribosomal translation pre-initiation complex which assembles on the 30S ribosome in the order IF-2 and IF-3, IF-1 and N-formylmethionyl-tRNA(fMet); mRNA recruitment can occur at any time during PIC assembly.

It localises to the cytoplasm. In terms of biological role, one of the essential components for the initiation of protein synthesis. Stabilizes the binding of IF-2 and IF-3 on the 30S subunit to which N-formylmethionyl-tRNA(fMet) subsequently binds. Helps modulate mRNA selection, yielding the 30S pre-initiation complex (PIC). Upon addition of the 50S ribosomal subunit IF-1, IF-2 and IF-3 are released leaving the mature 70S translation initiation complex. This chain is Translation initiation factor IF-1, found in Albidiferax ferrireducens (strain ATCC BAA-621 / DSM 15236 / T118) (Rhodoferax ferrireducens).